The sequence spans 492 residues: Transmembrane protein 39B (492 aa).

The interval 1–53 is disordered; the sequence is MGGRRGPNRTSYYRNPLCEPGSSGASGGGHSSSASVSSVRSRSRTTSGTGLSS. An N-linked (GlcNAc...) asparagine glycan is attached at N8. Over residues 31 to 53 the composition is skewed to low complexity; that stretch reads SSSASVSSVRSRSRTTSGTGLSS. The next 8 helical transmembrane spans lie at 77–97, 115–135, 153–175, 185–205, 288–308, 322–342, 421–441, and 447–467; these read SILFELQLFFCQLIALFVHYI, TSLNFHLIDFNLLMVTAIVLG, SLFRSILLFLTRFTVLTATGWSL, TYSFLNLLFLCYPFGMYIPFL, EVLVSSMLSAYYVAFVPVWFV, LFLLVSISTSVILMQHLLPAS, ILNILLLLEGAVIVYQLYSLM, and HQTISLALILFSNYYAFFKLL.

The protein belongs to the TMEM39 family.

The protein resides in the endoplasmic reticulum membrane. In terms of biological role, may protect the cells against DNA damage caused by exposure to the cold-warming stress and facilitates tissue damage repair during the recovery phase. The chain is Transmembrane protein 39B from Mus musculus (Mouse).